The chain runs to 110 residues: Large ribosomal subunit protein uL22 (110 aa).

The protein belongs to the universal ribosomal protein uL22 family. In terms of assembly, part of the 50S ribosomal subunit.

This protein binds specifically to 23S rRNA; its binding is stimulated by other ribosomal proteins, e.g. L4, L17, and L20. It is important during the early stages of 50S assembly. It makes multiple contacts with different domains of the 23S rRNA in the assembled 50S subunit and ribosome. Functionally, the globular domain of the protein is located near the polypeptide exit tunnel on the outside of the subunit, while an extended beta-hairpin is found that lines the wall of the exit tunnel in the center of the 70S ribosome. The protein is Large ribosomal subunit protein uL22 of Cellvibrio japonicus (strain Ueda107) (Pseudomonas fluorescens subsp. cellulosa).